The following is a 312-amino-acid chain: Ribosomal protein L11 methyltransferase (312 aa).

S-adenosyl-L-methionine contacts are provided by Thr-162, Gly-183, Asp-205, and Asn-248.

This sequence belongs to the methyltransferase superfamily. PrmA family.

Its subcellular location is the cytoplasm. The enzyme catalyses L-lysyl-[protein] + 3 S-adenosyl-L-methionine = N(6),N(6),N(6)-trimethyl-L-lysyl-[protein] + 3 S-adenosyl-L-homocysteine + 3 H(+). In terms of biological role, methylates ribosomal protein L11. This is Ribosomal protein L11 methyltransferase from Bacillus cereus (strain Q1).